The sequence spans 254 residues: 3-deoxy-manno-octulosonate cytidylyltransferase (254 aa).

It belongs to the KdsB family.

Its subcellular location is the cytoplasm. It catalyses the reaction 3-deoxy-alpha-D-manno-oct-2-ulosonate + CTP = CMP-3-deoxy-beta-D-manno-octulosonate + diphosphate. The protein operates within nucleotide-sugar biosynthesis; CMP-3-deoxy-D-manno-octulosonate biosynthesis; CMP-3-deoxy-D-manno-octulosonate from 3-deoxy-D-manno-octulosonate and CTP: step 1/1. Its function is as follows. Activates KDO (a required 8-carbon sugar) for incorporation into bacterial lipopolysaccharide in Gram-negative bacteria. In Lawsonia intracellularis (strain PHE/MN1-00), this protein is 3-deoxy-manno-octulosonate cytidylyltransferase.